Here is a 253-residue protein sequence, read N- to C-terminus: Sec-independent protein translocase protein TatC (253 aa).

Transmembrane regions (helical) follow at residues 19-39 (ILIIVVFFVIALVVGFFLATP), 70-90 (FAFTSAFILVFPIILYQLWAF), 109-129 (IAFFLFLGGLSFAYFILFPFL), 154-174 (FLFQITMPFGVLFQLPVVVMF), and 194-214 (FFVLLVVAGFITPPELISHLM).

Belongs to the TatC family. Forms a complex with TatA.

The protein resides in the cell membrane. Part of the twin-arginine translocation (Tat) system that transports large folded proteins containing a characteristic twin-arginine motif in their signal peptide across membranes. This chain is Sec-independent protein translocase protein TatC, found in Halalkalibacterium halodurans (strain ATCC BAA-125 / DSM 18197 / FERM 7344 / JCM 9153 / C-125) (Bacillus halodurans).